The following is a 202-amino-acid chain: MSRYRGPRVRIIRRLGTLPGLTNKIPQLKSSSINQSTSNKKISQYRIRLEEKQKLRFHYGITERQLLNYVRIARKAKGSTGEVLLQLLEMRLDNIIFRLGMAPTIPGARQLVNHRHILVNDCIVNIPSYRCKPQDFITIKNQRKSEAIISKNIEFYQNSKIPNHLTYSSLEKKGLVNQILDRESIGLKINELLVVEYYSRQA.

One can recognise an S4 RNA-binding domain in the interval 90–153 (MRLDNIIFRL…KSEAIISKNI (64 aa)).

The protein belongs to the universal ribosomal protein uS4 family. Part of the 30S ribosomal subunit. Contacts protein S5. The interaction surface between S4 and S5 is involved in control of translational fidelity.

It localises to the plastid. The protein resides in the chloroplast. Functionally, one of the primary rRNA binding proteins, it binds directly to 16S rRNA where it nucleates assembly of the body of the 30S subunit. With S5 and S12 plays an important role in translational accuracy. This is Small ribosomal subunit protein uS4c (rps4) from Leucodon sciuroides (Moss).